The primary structure comprises 230 residues: Orotidine 5'-phosphate decarboxylase (230 aa).

Substrate-binding positions include D11, K34, 61–70 (DLKLHDIPNT), T117, R179, Q188, G208, and R209. The Proton donor role is filled by K63.

It belongs to the OMP decarboxylase family. Type 1 subfamily. As to quaternary structure, homodimer.

The enzyme catalyses orotidine 5'-phosphate + H(+) = UMP + CO2. Its pathway is pyrimidine metabolism; UMP biosynthesis via de novo pathway; UMP from orotate: step 2/2. Functionally, catalyzes the decarboxylation of orotidine 5'-monophosphate (OMP) to uridine 5'-monophosphate (UMP). This is Orotidine 5'-phosphate decarboxylase from Streptococcus pyogenes serotype M28 (strain MGAS6180).